The chain runs to 148 residues: Aspartate 1-decarboxylase (148 aa).

The active-site Schiff-base intermediate with substrate; via pyruvic acid is the Ser-25. Residue Ser-25 is modified to Pyruvic acid (Ser). Thr-57 contributes to the substrate binding site. Tyr-58 serves as the catalytic Proton donor. 73 to 75 is a binding site for substrate; that stretch reads GAA.

The protein belongs to the PanD family. As to quaternary structure, heterooctamer of four alpha and four beta subunits. Pyruvate serves as cofactor. In terms of processing, is synthesized initially as an inactive proenzyme, which is activated by self-cleavage at a specific serine bond to produce a beta-subunit with a hydroxyl group at its C-terminus and an alpha-subunit with a pyruvoyl group at its N-terminus.

Its subcellular location is the cytoplasm. The catalysed reaction is L-aspartate + H(+) = beta-alanine + CO2. The protein operates within cofactor biosynthesis; (R)-pantothenate biosynthesis; beta-alanine from L-aspartate: step 1/1. Catalyzes the pyruvoyl-dependent decarboxylation of aspartate to produce beta-alanine. The chain is Aspartate 1-decarboxylase from Rhodococcus opacus (strain B4).